The primary structure comprises 403 residues: Eukaryotic translation initiation factor 3 subunit H (403 aa).

An MPN domain is found at 57 to 206; it reads VRLDGLALTK…VKAYRLSPSF (150 aa). The segment at 99–122 is disordered; sequence ALPNPGRSNSERDEEEDRSSRNAT.

It belongs to the eIF-3 subunit H family. In terms of assembly, component of the eukaryotic translation initiation factor 3 (eIF-3) complex.

The protein resides in the cytoplasm. Its function is as follows. Component of the eukaryotic translation initiation factor 3 (eIF-3) complex, which is involved in protein synthesis of a specialized repertoire of mRNAs and, together with other initiation factors, stimulates binding of mRNA and methionyl-tRNAi to the 40S ribosome. The eIF-3 complex specifically targets and initiates translation of a subset of mRNAs involved in cell proliferation. The sequence is that of Eukaryotic translation initiation factor 3 subunit H from Mycosarcoma maydis (Corn smut fungus).